Reading from the N-terminus, the 31-residue chain is Jingzhaotoxin F7-15.33 (31 aa).

Intrachain disulfides connect Cys2–Cys16, Cys9–Cys21, and Cys15–Cys28.

This sequence belongs to the neurotoxin 10 (Hwtx-1) family. In terms of tissue distribution, expressed by the venom gland.

It localises to the secreted. Functionally, probable ion channel inhibitor. The protein is Jingzhaotoxin F7-15.33 of Chilobrachys guangxiensis (Chinese earth tiger tarantula).